Here is a 142-residue protein sequence, read N- to C-terminus: MAKKSIGQLKLQVPAGAATPSPPIGPALGQRGINIMEFCKAFNAATQEMEKGAPIPVIITYYQDKSFTFSLKTPPVSFFLKKEVNLKSGSKEPGKVSVGRISRDKIRSIAEAKMKDLNANDIEAAMRMVEGSARSMGLEVVG.

It belongs to the universal ribosomal protein uL11 family. Part of the ribosomal stalk of the 50S ribosomal subunit. Interacts with L10 and the large rRNA to form the base of the stalk. L10 forms an elongated spine to which L12 dimers bind in a sequential fashion forming a multimeric L10(L12)X complex. In terms of processing, one or more lysine residues are methylated.

Its function is as follows. Forms part of the ribosomal stalk which helps the ribosome interact with GTP-bound translation factors. The chain is Large ribosomal subunit protein uL11 from Bartonella quintana (strain Toulouse) (Rochalimaea quintana).